The sequence spans 153 residues: NADH dehydrogenase [ubiquinone] 1 beta subcomplex subunit 11, mitochondrial (153 aa).

The transit peptide at 1–29 (MAAGLFGLSARRLLAAAATRGLPAARVRW) directs the protein to the mitochondrion. The disordered stretch occupies residues 49–72 (PEPTTQWQEDLDPEDENLYEKNPD). Residues 89–109 (LVFFFGVSIILVLGSTFVAYL) form a helical membrane-spanning segment.

It belongs to the complex I NDUFB11 subunit family. As to quaternary structure, complex I is composed of 45 different subunits. Interacts with BCAP31.

The protein resides in the mitochondrion inner membrane. Accessory subunit of the mitochondrial membrane respiratory chain NADH dehydrogenase (Complex I), that is believed not to be involved in catalysis. Complex I functions in the transfer of electrons from NADH to the respiratory chain. The immediate electron acceptor for the enzyme is believed to be ubiquinone. This is NADH dehydrogenase [ubiquinone] 1 beta subcomplex subunit 11, mitochondrial (NDUFB11) from Pongo pygmaeus (Bornean orangutan).